The sequence spans 214 residues: Probable nicotinate-nucleotide adenylyltransferase (214 aa).

It belongs to the NadD family.

It catalyses the reaction nicotinate beta-D-ribonucleotide + ATP + H(+) = deamido-NAD(+) + diphosphate. It functions in the pathway cofactor biosynthesis; NAD(+) biosynthesis; deamido-NAD(+) from nicotinate D-ribonucleotide: step 1/1. Its function is as follows. Catalyzes the reversible adenylation of nicotinate mononucleotide (NaMN) to nicotinic acid adenine dinucleotide (NaAD). In Rubrobacter xylanophilus (strain DSM 9941 / JCM 11954 / NBRC 16129 / PRD-1), this protein is Probable nicotinate-nucleotide adenylyltransferase.